Here is a 470-residue protein sequence, read N- to C-terminus: Cell division protein FtsP (470 aa).

Residues 1–27 constitute a signal peptide (tat-type signal); the sequence is MSLSRRQFIQASGIALCAGAVPLKASA. The Plastocyanin-like domain occupies 68–164; sequence WGINGRYLGP…NGLAGMWLVE (97 aa).

The protein belongs to the FtsP family. Exported by the Tat system. The position of the signal peptide cleavage has been experimentally proven. Can also be exported by the Sec system.

The protein resides in the periplasm. Functionally, cell division protein that is required for growth during stress conditions. May be involved in protecting or stabilizing the divisomal assembly under conditions of stress. In Escherichia coli (strain K12), this protein is Cell division protein FtsP.